Reading from the N-terminus, the 297-residue chain is Magnetosome protein MamB (297 aa).

Residues methionine 1–glutamate 12 lie on the Cytoplasmic side of the membrane. Residues methionine 1–glutamate 214 are transmembrane domain (TMD). A helical transmembrane segment spans residues valine 13–leucine 33. The Lumenal portion of the chain corresponds to methionine 34–serine 83. The helical transmembrane segment at serine 84–valine 104 threads the bilayer. Residues lysine 105–glutamate 112 are Cytoplasmic-facing. The chain crosses the membrane as a helical span at residues alanine 113–tyrosine 133. Residues arginine 134–alanine 164 lie on the Lumenal side of the membrane. The helical transmembrane segment at valine 165–isoleucine 185 threads the bilayer. The Cytoplasmic segment spans residues glycine 186–valine 297. The interval leucine 215 to valine 297 is C-terminal domain (CTD).

Belongs to the cation diffusion facilitator (CDF) transporter (TC 2.A.4) family. Forms homodimers via its C-terminal domain, may form higher order multimers that are sensitive to reducing agent. Probably interacts with MamE. Interacts with MamM via their C-terminal domains.

The protein localises to the cell inner membrane. It is found in the magnetosome membrane. Plays a dual, essential role in magnetosome formation; required for magnetosome vesicle formation as well as biomineralization. Requires heterodimerization with MamM for stability. Probably binds and transports iron. One of 7 genes (mamLQBIEMO) able to induce magnetosome membrane biogenesis; coexpression of mamLQRBIEMO in a deletion of the 17 gene mamAB operon restores magnetosome vesicle formation but not magnetite biosynthesis. The protein is Magnetosome protein MamB of Magnetospirillum gryphiswaldense (strain DSM 6361 / JCM 21280 / NBRC 15271 / MSR-1).